The following is a 177-amino-acid chain: Glutamyl-tRNA(Gln) amidotransferase subunit F, mitochondrial (177 aa).

The transit peptide at 1 to 16 (MIRINSRGLTVSTRRF) directs the protein to the mitochondrion. The disordered stretch occupies residues 148 to 177 (PAKGETQGSFNVANMNPRNRPFATIRSKQG). Residues 153–164 (TQGSFNVANMNP) are compositionally biased toward polar residues.

It belongs to the GatF family. As to quaternary structure, subunit of the heterotrimeric GatFAB amidotransferase (AdT) complex, composed of A, B and F subunits.

The protein localises to the mitochondrion inner membrane. The enzyme catalyses L-glutamyl-tRNA(Gln) + L-glutamine + ATP + H2O = L-glutaminyl-tRNA(Gln) + L-glutamate + ADP + phosphate + H(+). In terms of biological role, allows the formation of correctly charged Gln-tRNA(Gln) through the transamidation of misacylated Glu-tRNA(Gln) in the mitochondria. The reaction takes place in the presence of glutamine and ATP through an activated gamma-phospho-Glu-tRNA(Gln). Required for proper protein synthesis within the mitochondrion. The protein is Glutamyl-tRNA(Gln) amidotransferase subunit F, mitochondrial of Scheffersomyces stipitis (strain ATCC 58785 / CBS 6054 / NBRC 10063 / NRRL Y-11545) (Yeast).